We begin with the raw amino-acid sequence, 204 residues long: Glycerol-3-phosphate acyltransferase (204 aa).

The next 5 helical transmembrane spans lie at 12-32, 85-105, 117-137, 142-162, and 163-183; these read LVMG…HWLA, WQVA…WLGW, MLLG…LTVL, IVSL…ILRF, and QGNS…MVVW.

The protein belongs to the PlsY family. Probably interacts with PlsX.

Its subcellular location is the cell inner membrane. It carries out the reaction an acyl phosphate + sn-glycerol 3-phosphate = a 1-acyl-sn-glycero-3-phosphate + phosphate. Its pathway is lipid metabolism; phospholipid metabolism. Its function is as follows. Catalyzes the transfer of an acyl group from acyl-phosphate (acyl-PO(4)) to glycerol-3-phosphate (G3P) to form lysophosphatidic acid (LPA). This enzyme utilizes acyl-phosphate as fatty acyl donor, but not acyl-CoA or acyl-ACP. This chain is Glycerol-3-phosphate acyltransferase, found in Prochlorococcus marinus (strain MIT 9313).